Consider the following 527-residue polypeptide: Aspartokinase (527 aa).

Thr-333 is modified (phosphothreonine). One can recognise an ACT domain in the interval 442-527; sequence LVGKHMKQYI…RLEQLKRLGI (86 aa).

It belongs to the aspartokinase family. Homohexamer. Interacts with FPR1; the interaction is direct, plays a role in feedback inhibition of aspartokinase by threonine, and inhibited by tacrolimus and sirolimus.

It carries out the reaction L-aspartate + ATP = 4-phospho-L-aspartate + ADP. The protein operates within amino-acid biosynthesis; L-methionine biosynthesis via de novo pathway; L-homoserine from L-aspartate: step 1/3. It functions in the pathway amino-acid biosynthesis; L-threonine biosynthesis; L-threonine from L-aspartate: step 1/5. Allosterically inhibited by threonine. Phosphorylates aspartate, the first step in the biosynthesis of amino acids that derive from aspartate (the aspartate family of amino acids), including methioinine and threonine, the latter of which is a precursor to isoleucine. The chain is Aspartokinase (HOM3) from Saccharomyces cerevisiae (strain ATCC 204508 / S288c) (Baker's yeast).